The following is a 191-amino-acid chain: Hypoxanthine/guanine phosphoribosyltransferase (191 aa).

This sequence belongs to the purine/pyrimidine phosphoribosyltransferase family. Archaeal HPRT subfamily. As to quaternary structure, homodimer.

It is found in the cytoplasm. The catalysed reaction is IMP + diphosphate = hypoxanthine + 5-phospho-alpha-D-ribose 1-diphosphate. It carries out the reaction GMP + diphosphate = guanine + 5-phospho-alpha-D-ribose 1-diphosphate. The protein operates within purine metabolism; IMP biosynthesis via salvage pathway; IMP from hypoxanthine: step 1/1. Catalyzes a salvage reaction resulting in the formation of IMP that is energically less costly than de novo synthesis. This chain is Hypoxanthine/guanine phosphoribosyltransferase, found in Methanocella arvoryzae (strain DSM 22066 / NBRC 105507 / MRE50).